We begin with the raw amino-acid sequence, 961 residues long: Mitogen-activated protein kinase kinase kinase 13-B (961 aa).

A disordered region spans residues Arg-89 to Glu-115. A compositionally biased stretch (low complexity) spans Gly-101–Asn-114. Residues Ile-171–Ile-412 enclose the Protein kinase domain. Residues Leu-177–Val-185 and Lys-198 contribute to the ATP site. The active-site Proton acceptor is Asp-282. 2 leucine-zipper regions span residues Val-436–Leu-457 and Leu-489–Val-510. A coiled-coil region spans residues Arg-460–Glu-497. Disordered regions lie at residues Glu-507–Gln-644, Thr-796–Cys-874, and Asn-933–Trp-961. Residues Ala-563–Ser-580 show a composition bias toward low complexity. Over residues Gly-586–Asn-598 the composition is skewed to basic residues. The segment covering Gln-613–Pro-628 has biased composition (low complexity). The segment covering Asp-813–Val-826 has biased composition (acidic residues). The tract at residues Ser-814 to Glu-827 is acidic. Residues Ser-839 to Val-854 are compositionally biased toward polar residues. Residues Ala-934–Cys-945 are compositionally biased toward acidic residues. Polar residues predominate over residues Thr-949–Trp-961.

Belongs to the protein kinase superfamily. Ser/Thr protein kinase family.

The protein localises to the cytoplasm. It localises to the membrane. It carries out the reaction L-seryl-[protein] + ATP = O-phospho-L-seryl-[protein] + ADP + H(+). The enzyme catalyses L-threonyl-[protein] + ATP = O-phospho-L-threonyl-[protein] + ADP + H(+). May have a role in the JNK signaling pathway. This is Mitogen-activated protein kinase kinase kinase 13-B (map3k13-b) from Xenopus laevis (African clawed frog).